Reading from the N-terminus, the 359-residue chain is MMTIQEIYEYLSRFFTPVELIGNGEELIHAPAKIESAQAGEVTFVANKKYLRFLALTEASLVIVERSLAVEEYVGKHSFLKVNDPYSAFVFLLQRFIPPRRIAKQGIAATASIGSNVTIGENVSIGEYAVIGEHCSIGNNTVIAAHSVLLDHVTIGSDVVLFPHVTCYDGTRIGNRVVIHSGAVIGADGFGFAPQQDGSYIKIPQIGIVEIGDDVEIGANTTIDRATLGSTVIESGVKLDNLVQVAHNCRIGAHTVIAAQAGVSGSTTLGNHCIVGGQVGFAGHIEVSDHIQVAAKAGVSKSFMQSGIALRGYPAQPMREQLKYEAQLRTVGDLHAKLKALEQELKALRGSEMPLQNTL.

The Proton acceptor role is filled by His247.

Belongs to the transferase hexapeptide repeat family. LpxD subfamily. As to quaternary structure, homotrimer.

It catalyses the reaction a UDP-3-O-[(3R)-3-hydroxyacyl]-alpha-D-glucosamine + a (3R)-hydroxyacyl-[ACP] = a UDP-2-N,3-O-bis[(3R)-3-hydroxyacyl]-alpha-D-glucosamine + holo-[ACP] + H(+). Its pathway is bacterial outer membrane biogenesis; LPS lipid A biosynthesis. Catalyzes the N-acylation of UDP-3-O-acylglucosamine using 3-hydroxyacyl-ACP as the acyl donor. Is involved in the biosynthesis of lipid A, a phosphorylated glycolipid that anchors the lipopolysaccharide to the outer membrane of the cell. This is UDP-3-O-acylglucosamine N-acyltransferase from Chlorobium chlorochromatii (strain CaD3).